Consider the following 303-residue polypeptide: Mitochondrial basic amino acids transporter (303 aa).

Transmembrane regions (helical) follow at residues 2 to 22 (ALDF…GHPF), 61 to 81 (GLGS…GVQG), 96 to 116 (FLAG…MELA), 153 to 172 (GMVS…FLTY), 187 to 207 (LLVP…WLST), and 255 to 275 (LLRA…VLTY). Solcar repeat units lie at residues 2–86 (ALDF…TLRA), 90–178 (DSPL…LTRA), and 185–275 (DRLL…VLTY). The segment at 282-303 (GPEGEAVPAAPAGPALAQPSSL) is disordered. Residues 284-303 (EGEAVPAAPAGPALAQPSSL) are compositionally biased toward low complexity.

Belongs to the mitochondrial carrier (TC 2.A.29) family.

The protein localises to the mitochondrion inner membrane. It catalyses the reaction L-lysine(out) + L-arginine(in) = L-lysine(in) + L-arginine(out). The catalysed reaction is L-histidine(out) + L-arginine(in) = L-histidine(in) + L-arginine(out). It carries out the reaction L-ornithine(in) + L-arginine(out) = L-ornithine(out) + L-arginine(in). The enzyme catalyses L-homoarginine(in) + L-arginine(out) = L-homoarginine(out) + L-arginine(in). It catalyses the reaction N(omega)-methyl-L-arginine(in) + L-arginine(out) = N(omega)-methyl-L-arginine(out) + L-arginine(in). The catalysed reaction is L-arginine(in) = L-arginine(out). It carries out the reaction L-lysine(in) = L-lysine(out). The enzyme catalyses L-ornithine(in) = L-ornithine(out). It catalyses the reaction L-histidine(out) = L-histidine(in). Mitochondrial transporter of arginine, lysine, homoarginine, methylarginine and, to a much lesser extent, ornithine and histidine. Does not transport carnitine nor acylcarnitines. Functions by both counter-exchange and uniport mechanisms. Plays a physiological role in the import of basic amino acids into mitochondria for mitochondrial protein synthesis and amino acid degradation. The chain is Mitochondrial basic amino acids transporter from Homo sapiens (Human).